Here is a 422-residue protein sequence, read N- to C-terminus: uncharacterized protein (422 aa).

A phosphoserine mark is found at S124, S126, and S151. Positions 144 to 166 are disordered; sequence TNSLNHDSPPSTPPRRPDTSTSK. K250 is covalently cross-linked (Glycyl lysine isopeptide (Lys-Gly) (interchain with G-Cter in SUMO2)). Disordered stretches follow at residues 251–285 and 299–324; these read ADTT…NDSS and GRGP…ATTA. Residues 271-282 show a composition bias toward acidic residues; it reads ETDEDLAWDSDN. Residues S280 and S306 each carry the phosphoserine modification. Positions 310–324 are enriched in low complexity; it reads ALTVKAKATSSATTA. Position 351 is a phosphoserine (S351).

This is an uncharacterized protein from Homo sapiens (Human).